The sequence spans 794 residues: Solute carrier family 26 member 9 (794 aa).

Residues 1 to 70 (MNKVRPRYII…WLPKYNIKGN (70 aa)) lie on the Cytoplasmic side of the membrane. A helical transmembrane segment spans residues 71-96 (LLNDALGGISAGTIQIPQGMAFALLA). Over 97–100 (NLPP) the chain is Extracellular. Residues 101 to 109 (VNGLYSSFF) form a helical membrane-spanning segment. The Cytoplasmic segment spans residues 110–129 (PLVVYFFMGGIPQMVPGTFA). A helical membrane pass occupies residues 130–142 (VISIIVGNVCLKL). The Extracellular portion of the chain corresponds to 143 to 160 (APESHFQNVTSNGTITNI). The helical transmembrane segment at 161-189 (EAMNTARMHISATLACLTAIIQIALSFVQ) threads the bilayer. Residues 190 to 199 (FGFVAIYLSE) lie on the Cytoplasmic side of the membrane. A helical membrane pass occupies residues 200 to 222 (SFIRGFMTAAGLQILISVLKYIF). The Extracellular segment spans residues 223 to 235 (GVSIPPYSGVLAI). Residues 236–244 (IYTFIDICK) constitute an intramembrane region (helical). Over 245-252 (ELPKTNVA) the chain is Extracellular. A helical transmembrane segment spans residues 253–273 (SLIFALISTVLLIIVKELNMK). Topologically, residues 274 to 284 (FMHKIRFPIPM) are cytoplasmic. The chain crosses the membrane as a helical span at residues 285–297 (EIIIVIVATAVSG). The Extracellular portion of the chain corresponds to 298–332 (SFKLPERYHMNVVGHIPLGFPSPTVPNVTQWDEMV). A helical membrane pass occupies residues 333–356 (GTAFSLAIVGYVINLAMGRTLGAK). The Cytoplasmic segment spans residues 357–363 (HGFDVDA). A helical transmembrane segment spans residues 364-377 (NQEMLALGSGNFFG). The Extracellular segment spans residues 378–388 (SFFFIHVICCA). Residues 389-398 (LSVTLAVDGA) traverse the membrane as a helical segment. Residues 399–403 (GGKSQ) are Cytoplasmic-facing. Residues 404 to 417 (IASFFVMMSVMVTI) form a helical membrane-spanning segment. Residues 418 to 429 (LALGTYLNPLPK) lie on the Extracellular side of the membrane. The helical transmembrane segment at 430–455 (SVLGALIAVNLKNSLKQLSDPFYLWK) threads the bilayer. Residues 456–459 (KSKL) lie on the Cytoplasmic side of the membrane. Residues 460–474 (DCLVWLVSFFSTFIL) form a helical membrane-spanning segment. At 475 to 477 (GLP) the chain is on the extracellular side. A helical transmembrane segment spans residues 478–496 (YGLAVGVAFSILVVIFNTQ). Residues 497 to 794 (FRNGSSLNQV…MFQTEIQTAL (298 aa)) lie on the Cytoplasmic side of the membrane. An STAS domain is found at 517 to 739 (VYSKVQPIDG…ITVHDAVLYA (223 aa)).

It belongs to the SLC26A/SulP transporter (TC 2.A.53) family. As to quaternary structure, homodimer.

It is found in the cell membrane. Its subcellular location is the endomembrane system. It carries out the reaction chloride(in) = chloride(out). It catalyses the reaction hydrogencarbonate(in) + chloride(out) = hydrogencarbonate(out) + chloride(in). Inhibited by ammonium and thiosulfate. Its function is as follows. Ion transporter that can act both as an ion channel and anion exchanger. Mainly acts as a chloride channel, which mediate uncoupled chloride anion transport in an alternate-access mechanism where a saturable binding site is alternately exposed to either one or the other side of the membrane. Also acts as a DIDS- and thiosulfate- sensitive anion exchanger the exchange of chloride for bicarbonate ions across the cell membrane. This chain is Solute carrier family 26 member 9 (slc26a9), found in Xenopus tropicalis (Western clawed frog).